The chain runs to 324 residues: HTH-type transcriptional regulator GlxA (324 aa).

Positions 223–321 (LAVLEKMETA…SQTPGSLRRR (99 aa)) constitute an HTH araC/xylS-type domain. 2 consecutive DNA-binding regions (H-T-H motif) follow at residues 240–261 (TAMA…REHR) and 288–311 (IPEI…KRLF).

This Rhizobium meliloti (strain 1021) (Ensifer meliloti) protein is HTH-type transcriptional regulator GlxA (glxA).